Here is a 331-residue protein sequence, read N- to C-terminus: MTHIPKTPADTETLLSEVQGWKHRHVLDLDNFSREELDMVMQTAGVMLDILSRPVKKVPALKGKTIATLFYEPSTRTRSSFELAAKSLSADVLNLNVSQSSISKGESLLDTLDTLESLGADMVVMRHPLSGAPYLAANNCHANIINAGDGWHAHPSQALLDIFTILRHKSSLEGLKITLIGDIKHSRVAHSNIWGLSKMGAKITLCAPYTLLPEGLNTNSKIFPEVTLETDIKQAVSGADVVMGLRLQRERQQSGLLPGIREYARYFQLNEEILKLAKPNSLVMHPGPVNEDIELSQSVVHGEQSVINEQVKNGVAVRMALFYLCSGSKEI.

Carbamoyl phosphate-binding residues include Arg-76 and Thr-77. Lys-104 is an L-aspartate binding site. The carbamoyl phosphate site is built by Arg-126, His-154, and Gln-157. 2 residues coordinate L-aspartate: Arg-187 and Arg-246. Carbamoyl phosphate-binding residues include Gly-287 and Pro-288.

It belongs to the aspartate/ornithine carbamoyltransferase superfamily. ATCase family. As to quaternary structure, heterododecamer (2C3:3R2) of six catalytic PyrB chains organized as two trimers (C3), and six regulatory PyrI chains organized as three dimers (R2).

It carries out the reaction carbamoyl phosphate + L-aspartate = N-carbamoyl-L-aspartate + phosphate + H(+). The protein operates within pyrimidine metabolism; UMP biosynthesis via de novo pathway; (S)-dihydroorotate from bicarbonate: step 2/3. Catalyzes the condensation of carbamoyl phosphate and aspartate to form carbamoyl aspartate and inorganic phosphate, the committed step in the de novo pyrimidine nucleotide biosynthesis pathway. This is Aspartate carbamoyltransferase catalytic subunit from Dehalococcoides mccartyi (strain CBDB1).